The chain runs to 89 residues: Small ribosomal subunit protein uS15 (89 aa).

Residues 1–21 (MALSKEQKTETLKEFGLHETD) are compositionally biased toward basic and acidic residues. The interval 1 to 22 (MALSKEQKTETLKEFGLHETDT) is disordered.

Belongs to the universal ribosomal protein uS15 family. Part of the 30S ribosomal subunit. Forms a bridge to the 50S subunit in the 70S ribosome, contacting the 23S rRNA.

Its function is as follows. One of the primary rRNA binding proteins, it binds directly to 16S rRNA where it helps nucleate assembly of the platform of the 30S subunit by binding and bridging several RNA helices of the 16S rRNA. Forms an intersubunit bridge (bridge B4) with the 23S rRNA of the 50S subunit in the ribosome. The polypeptide is Small ribosomal subunit protein uS15 (Corynebacterium jeikeium (strain K411)).